The following is a 334-amino-acid chain: Lipoyl synthase (334 aa).

[4Fe-4S] cluster contacts are provided by Cys71, Cys76, Cys82, Cys97, Cys101, Cys104, and Ser312. The Radical SAM core domain occupies 83 to 301 (WSHGTATFMV…RQEGLRRGFR (219 aa)).

It belongs to the radical SAM superfamily. Lipoyl synthase family. [4Fe-4S] cluster is required as a cofactor.

The protein localises to the cytoplasm. It catalyses the reaction [[Fe-S] cluster scaffold protein carrying a second [4Fe-4S](2+) cluster] + N(6)-octanoyl-L-lysyl-[protein] + 2 oxidized [2Fe-2S]-[ferredoxin] + 2 S-adenosyl-L-methionine + 4 H(+) = [[Fe-S] cluster scaffold protein] + N(6)-[(R)-dihydrolipoyl]-L-lysyl-[protein] + 4 Fe(3+) + 2 hydrogen sulfide + 2 5'-deoxyadenosine + 2 L-methionine + 2 reduced [2Fe-2S]-[ferredoxin]. Its pathway is protein modification; protein lipoylation via endogenous pathway; protein N(6)-(lipoyl)lysine from octanoyl-[acyl-carrier-protein]: step 2/2. Catalyzes the radical-mediated insertion of two sulfur atoms into the C-6 and C-8 positions of the octanoyl moiety bound to the lipoyl domains of lipoate-dependent enzymes, thereby converting the octanoylated domains into lipoylated derivatives. The sequence is that of Lipoyl synthase from Halorhodospira halophila (strain DSM 244 / SL1) (Ectothiorhodospira halophila (strain DSM 244 / SL1)).